The sequence spans 205 residues: Putative 3-methyladenine DNA glycosylase (205 aa).

This sequence belongs to the DNA glycosylase MPG family.

The chain is Putative 3-methyladenine DNA glycosylase from Bacillus anthracis (strain A0248).